The following is a 352-amino-acid chain: Ion-translocating oxidoreductase complex subunit D (352 aa).

The next 4 membrane-spanning stretches (helical) occupy residues 20–40 (IMLL…WFFG), 42–62 (GTLV…ALVL), 89–109 (IPPL…VIIA), and 123–143 (PAMI…TSWL). An FMN phosphoryl threonine modification is found at threonine 187. The next 5 helical transmembrane spans lie at 214–234 (ILAG…GLWL), 242–262 (WHIP…GWLF), 267–287 (LAAP…FFIL), 301–321 (LIFG…GGYP), and 322–342 (DGVA…DYYT).

Belongs to the NqrB/RnfD family. The complex is composed of six subunits: RsxA, RsxB, RsxC, RsxD, RsxE and RsxG. Requires FMN as cofactor.

It is found in the cell inner membrane. Functionally, part of a membrane-bound complex that couples electron transfer with translocation of ions across the membrane. Required to maintain the reduced state of SoxR. This Shigella boydii serotype 18 (strain CDC 3083-94 / BS512) protein is Ion-translocating oxidoreductase complex subunit D.